Reading from the N-terminus, the 344-residue chain is Methylthioribose-1-phosphate isomerase (344 aa).

Residues 46 to 48, Arg-89, and Gln-196 each bind substrate; that span reads RGA. Asp-237 (proton donor) is an active-site residue. 247 to 248 is a binding site for substrate; the sequence is NK.

Belongs to the eIF-2B alpha/beta/delta subunits family. MtnA subfamily.

It catalyses the reaction 5-(methylsulfanyl)-alpha-D-ribose 1-phosphate = 5-(methylsulfanyl)-D-ribulose 1-phosphate. It participates in amino-acid biosynthesis; L-methionine biosynthesis via salvage pathway; L-methionine from S-methyl-5-thio-alpha-D-ribose 1-phosphate: step 1/6. Its function is as follows. Catalyzes the interconversion of methylthioribose-1-phosphate (MTR-1-P) into methylthioribulose-1-phosphate (MTRu-1-P). This chain is Methylthioribose-1-phosphate isomerase, found in Syntrophotalea carbinolica (strain DSM 2380 / NBRC 103641 / GraBd1) (Pelobacter carbinolicus).